A 383-amino-acid polypeptide reads, in one-letter code: MAKHLFTSESVSEGHPDKIADQISDAVLDAILAQDPKARVACETYVKTGMVLVGGEVTTSAWVDIEEITRKTVREIGYTHSDMGFDADSCAVLNAIGKQSPDINQGVDRADPAEQGAGDQGLMFGYANNETDVLMPAPITYAHALVKRQSEVRKNGTLPWLRPDAKSQVTFAYDDGKIVGIDAVVLSTQHRDDVSQADLIEGVMETIIKPVLPAQWLNKDTKFFINPTGRFVIGGPVGDCGLTGRKIIVDTYGGMARHGGGAFSGKDPSKVDRSAAYAARYVAKNIVAAGLADRCEIQVSYAIGVAEPTSISIETFGTGKVSEDLLIKLVRQHFELRPYGLTAMLDLARPIYQATAAYGHFGRNEFPWEATDKAEALRADAGL.

An ATP-binding site is contributed by histidine 15. Residue aspartate 17 coordinates Mg(2+). Glutamate 43 serves as a coordination point for K(+). L-methionine is bound by residues glutamate 56 and glutamine 99. The segment at 99-109 (QSPDINQGVDR) is flexible loop. ATP is bound by residues 164 to 166 (DAK), 230 to 231 (RF), aspartate 239, 245 to 246 (RK), alanine 262, and lysine 266. Position 239 (aspartate 239) interacts with L-methionine. Residue lysine 270 participates in L-methionine binding.

The protein belongs to the AdoMet synthase family. In terms of assembly, homotetramer; dimer of dimers. Mg(2+) serves as cofactor. Requires K(+) as cofactor.

It localises to the cytoplasm. It carries out the reaction L-methionine + ATP + H2O = S-adenosyl-L-methionine + phosphate + diphosphate. Its pathway is amino-acid biosynthesis; S-adenosyl-L-methionine biosynthesis; S-adenosyl-L-methionine from L-methionine: step 1/1. Functionally, catalyzes the formation of S-adenosylmethionine (AdoMet) from methionine and ATP. The overall synthetic reaction is composed of two sequential steps, AdoMet formation and the subsequent tripolyphosphate hydrolysis which occurs prior to release of AdoMet from the enzyme. The polypeptide is S-adenosylmethionine synthase (Shewanella baltica (strain OS223)).